Consider the following 95-residue polypeptide: Small ribosomal subunit protein bS6 (95 aa).

It belongs to the bacterial ribosomal protein bS6 family.

In terms of biological role, binds together with bS18 to 16S ribosomal RNA. The protein is Small ribosomal subunit protein bS6 of Exiguobacterium sibiricum (strain DSM 17290 / CCUG 55495 / CIP 109462 / JCM 13490 / 255-15).